The chain runs to 29 residues: Cyclotide psyleio B (29 aa).

A cross-link (cyclopeptide (Gly-Arg)) is located at residues 1–29 (GDLPICGETCFGGTCNTPGCVCAWPVCNR). Intrachain disulfides connect C6–C20, C10–C22, and C15–C27.

This is a cyclic peptide.

Functionally, probably participates in a plant defense mechanism. This is Cyclotide psyleio B from Psychotria brachyceras.